The sequence spans 301 residues: Oxygen-dependent coproporphyrinogen-III oxidase (301 aa).

A substrate-binding site is contributed by Ser-90. Residues His-94 and His-104 each contribute to the a divalent metal cation site. Residue His-104 is the Proton donor of the active site. 106–108 (NVR) provides a ligand contact to substrate. Residues His-143 and His-173 each coordinate a divalent metal cation. Positions 238–273 (YVEFNLVWDRGTLFGLQSGGRTESILMSLPPVVKWR) are important for dimerization. 256-258 (GGR) lines the substrate pocket.

This sequence belongs to the aerobic coproporphyrinogen-III oxidase family. Homodimer. Requires a divalent metal cation as cofactor.

The protein localises to the cytoplasm. It carries out the reaction coproporphyrinogen III + O2 + 2 H(+) = protoporphyrinogen IX + 2 CO2 + 2 H2O. It participates in porphyrin-containing compound metabolism; protoporphyrin-IX biosynthesis; protoporphyrinogen-IX from coproporphyrinogen-III (O2 route): step 1/1. Functionally, involved in the heme biosynthesis. Catalyzes the aerobic oxidative decarboxylation of propionate groups of rings A and B of coproporphyrinogen-III to yield the vinyl groups in protoporphyrinogen-IX. This chain is Oxygen-dependent coproporphyrinogen-III oxidase, found in Nitrosomonas europaea (strain ATCC 19718 / CIP 103999 / KCTC 2705 / NBRC 14298).